We begin with the raw amino-acid sequence, 512 residues long: Maturase K (512 aa).

The protein belongs to the intron maturase 2 family. MatK subfamily.

It is found in the plastid. Its subcellular location is the chloroplast. Its function is as follows. Usually encoded in the trnK tRNA gene intron. Probably assists in splicing its own and other chloroplast group II introns. This chain is Maturase K, found in Amorphophallus abyssinicus (Black arum).